The chain runs to 62 residues: Photosystem II reaction center protein Z (62 aa).

Helical transmembrane passes span 8–28 (AVFA…VVFA) and 41–61 (FSGT…NSLI).

Belongs to the PsbZ family. In terms of assembly, PSII is composed of 1 copy each of membrane proteins PsbA, PsbB, PsbC, PsbD, PsbE, PsbF, PsbH, PsbI, PsbJ, PsbK, PsbL, PsbM, PsbT, PsbY, PsbZ, Psb30/Ycf12, at least 3 peripheral proteins of the oxygen-evolving complex and a large number of cofactors. It forms dimeric complexes.

The protein resides in the plastid. It is found in the chloroplast thylakoid membrane. Its function is as follows. May control the interaction of photosystem II (PSII) cores with the light-harvesting antenna, regulates electron flow through the 2 photosystem reaction centers. PSII is a light-driven water plastoquinone oxidoreductase, using light energy to abstract electrons from H(2)O, generating a proton gradient subsequently used for ATP formation. This is Photosystem II reaction center protein Z from Nymphaea alba (White water-lily).